The sequence spans 42 residues: Photosystem I reaction center subunit IX (42 aa).

The helical transmembrane segment at 7 to 27 threads the bilayer; the sequence is YLSTAPVLATIWFIILAGLLI.

Belongs to the PsaJ family.

The protein localises to the plastid. The protein resides in the chloroplast thylakoid membrane. In terms of biological role, may help in the organization of the PsaE and PsaF subunits. In Mesostigma viride (Green alga), this protein is Photosystem I reaction center subunit IX.